We begin with the raw amino-acid sequence, 205 residues long: uncharacterized protein (205 aa).

The signal sequence occupies residues 1-19; that stretch reads MKTLCVLSIFLALLGGLCT. Positions 40–133 are enriched in low complexity; sequence VSSVASTSTP…PKTSKNNPKT (94 aa). A disordered region spans residues 40–135; it reads VSSVASTSTP…TSKNNPKTQE (96 aa). Residues 147 to 167 form a helical membrane-spanning segment; it reads GILYLFILLLIIFVIILICFI.

It is found in the host membrane. This is an uncharacterized protein from Equine herpesvirus 2 (strain 86/87) (EHV-2).